A 439-amino-acid chain; its full sequence is Xylose isomerase (439 aa).

Catalysis depends on residues His-101 and Asp-104. Mg(2+)-binding residues include Glu-232, Glu-268, His-271, Asp-296, Asp-307, Asp-309, and Asp-339.

The protein belongs to the xylose isomerase family. In terms of assembly, homotetramer. The cofactor is Mg(2+).

The protein localises to the cytoplasm. It carries out the reaction alpha-D-xylose = alpha-D-xylulofuranose. This chain is Xylose isomerase (xylA), found in Thermoanaerobacterium saccharolyticum.